A 448-amino-acid chain; its full sequence is Cysteine--tRNA ligase (448 aa).

Cys27 lines the Zn(2+) pocket. Positions 29 to 39 (PTVYNYIHVGN) match the 'HIGH' region motif. Zn(2+)-binding residues include Cys210, His235, and Glu239. The 'KMSKS' region motif lies at 267–271 (KMSKS). Lys270 contributes to the ATP binding site.

Belongs to the class-I aminoacyl-tRNA synthetase family. In terms of assembly, monomer. Requires Zn(2+) as cofactor.

The protein localises to the cytoplasm. It carries out the reaction tRNA(Cys) + L-cysteine + ATP = L-cysteinyl-tRNA(Cys) + AMP + diphosphate. The chain is Cysteine--tRNA ligase from Lactococcus lactis subsp. cremoris (strain MG1363).